Here is a 149-residue protein sequence, read N- to C-terminus: Large ribosomal subunit protein uL15 (149 aa).

Residues 1-11 (MSDPIKLHDLR) are compositionally biased toward basic and acidic residues. The disordered stretch occupies residues 1–44 (MSDPIKLHDLRPAPGAKKAKTRVGRGEASKGKTAGRGTKGTKAR).

It belongs to the universal ribosomal protein uL15 family. As to quaternary structure, part of the 50S ribosomal subunit.

Functionally, binds to the 23S rRNA. This Corynebacterium jeikeium (strain K411) protein is Large ribosomal subunit protein uL15.